A 217-amino-acid chain; its full sequence is Protein-L-isoaspartate O-methyltransferase 2 (217 aa).

The active site involves Ser-64.

This sequence belongs to the methyltransferase superfamily. L-isoaspartyl/D-aspartyl protein methyltransferase family.

Its subcellular location is the cytoplasm. It carries out the reaction [protein]-L-isoaspartate + S-adenosyl-L-methionine = [protein]-L-isoaspartate alpha-methyl ester + S-adenosyl-L-homocysteine. Functionally, catalyzes the methyl esterification of L-isoaspartyl residues in peptides and proteins that result from spontaneous decomposition of normal L-aspartyl and L-asparaginyl residues. It plays a role in the repair and/or degradation of damaged proteins. This chain is Protein-L-isoaspartate O-methyltransferase 2, found in Rhodopseudomonas palustris (strain HaA2).